Consider the following 124-residue polypeptide: Ribonuclease P protein component (124 aa).

Belongs to the RnpA family. Consists of a catalytic RNA component (M1 or rnpB) and a protein subunit.

It carries out the reaction Endonucleolytic cleavage of RNA, removing 5'-extranucleotides from tRNA precursor.. Functionally, RNaseP catalyzes the removal of the 5'-leader sequence from pre-tRNA to produce the mature 5'-terminus. It can also cleave other RNA substrates such as 4.5S RNA. The protein component plays an auxiliary but essential role in vivo by binding to the 5'-leader sequence and broadening the substrate specificity of the ribozyme. In Mycolicibacterium gilvum (strain PYR-GCK) (Mycobacterium gilvum (strain PYR-GCK)), this protein is Ribonuclease P protein component.